The following is a 268-amino-acid chain: MKKQAIGFIDSGVGGLTVVKEAMRQLPNESIYYVGDTARCPYGPRPEDQVRKFTWEMTHFLLDKNIKMLVIACNTATAAALKDIKKKLAIPVIGVILPGSRAAIKATHTNRIGVIGTEGTVKSNQYKKMIHSKDTKALVTSLACPKFVPLVESNEYSSAIAKKVVAETLRPLKNEGLDTLILGCTHYPLLRPIIQNTLGDSVTLIDSGAETVSEVSTILDYFNLAVDSQNKEKAERNFYTTGSSQMFHAIASEWLQLDDLAVEHITLG.

Substrate-binding positions include 10–11 (DS) and 42–43 (YG). Cys-73 (proton donor/acceptor) is an active-site residue. 74 to 75 (NT) contributes to the substrate binding site. Residue Cys-184 is the Proton donor/acceptor of the active site. Residue 185–186 (TH) participates in substrate binding.

This sequence belongs to the aspartate/glutamate racemases family.

The enzyme catalyses L-glutamate = D-glutamate. Its pathway is cell wall biogenesis; peptidoglycan biosynthesis. Its function is as follows. Provides the (R)-glutamate required for cell wall biosynthesis. The protein is Glutamate racemase of Carnobacterium sp. (strain St2).